The chain runs to 1030 residues: MMS19 nucleotide excision repair protein homolog (1030 aa).

N-acetylalanine is present on alanine 2. Lysine 496 carries the N6-acetyllysine modification. 4 HEAT repeats span residues 866–904, 908–946, 949–987, and 990–1028; these read QRFF…RLPK, LPEL…EAPQ, SLHV…LPTP, and LPYK…LGSP. Phosphoserine is present on serine 1027.

The protein belongs to the MET18/MMS19 family. As to quaternary structure, component of the CIA complex. In the CIA complex, interacts directly with CIAO2B and CIAO3. Component of the MMXD complex, composed of CIAO1, ERCC2, CIAO2B, MMS19 and SLC25A5. Interacts with CIAO2B; the interaction is direct. Interacts with ERCC2/XPD; the interaction is direct. Interacts with ERCC3/XPB and NCOA3/RAC3. Interacts with RTEL1; the interaction mediates the association of RTEL1 with the CIA complex. Interacts with BRIP1. Interacts with KIF4A; the interaction facilitates the transfer of Fe-S clusters to KIF4A to ensure proper localization of KIF4A to the mitotic machinery components. Interacts with CCDC117; the interaction is indirect. In terms of processing, ubiquitinated; undergoes 'Lys-48'-linked polyubiquitination by MAGEF1-NSMCE1 ubiquitin ligase complex leading to proteasomal degradation. Ubiquitously expressed with higher expression in testis.

The protein resides in the nucleus. It is found in the cytoplasm. Its subcellular location is the cytoskeleton. It localises to the spindle. The protein localises to the microtubule organizing center. The protein resides in the centrosome. Key component of the cytosolic iron-sulfur protein assembly (CIA) complex, a multiprotein complex that mediates the incorporation of iron-sulfur cluster into apoproteins specifically involved in DNA metabolism and genomic integrity. In the CIA complex, MMS19 acts as an adapter between early-acting CIA components and a subset of cellular target iron-sulfur proteins such as ERCC2/XPD, FANCJ and RTEL1, thereby playing a key role in nucleotide excision repair (NER), homologous recombination-mediated double-strand break DNA repair, DNA replication and RNA polymerase II (POL II) transcription. As part of the mitotic spindle-associated MMXD complex, plays a role in chromosome segregation, probably by facilitating iron-sulfur (Fe-S) cluster assembly into ERCC2/XPD. Together with CIAO2, facilitates the transfer of Fe-S clusters to the motor protein KIF4A, which ensures proper localization of KIF4A to mitotic machinery components to promote the progression of mitosis. Indirectly acts as a transcriptional coactivator of estrogen receptor (ER), via its role in iron-sulfur insertion into some component of the TFIIH-machinery. This Homo sapiens (Human) protein is MMS19 nucleotide excision repair protein homolog.